The chain runs to 537 residues: 2-isopropylmalate synthase (537 aa).

Residues 8 to 269 (VLIFDTTLRD…YFNGYLGRAE (262 aa)) enclose the Pyruvate carboxyltransferase domain. Mn(2+) is bound by residues D17, H208, H210, and N244. The interval 408 to 537 (QLAGVQVSCG…QRAPLPAPAL (130 aa)) is regulatory domain.

The protein belongs to the alpha-IPM synthase/homocitrate synthase family. LeuA type 1 subfamily. Homodimer. The cofactor is Mn(2+).

The protein localises to the cytoplasm. It catalyses the reaction 3-methyl-2-oxobutanoate + acetyl-CoA + H2O = (2S)-2-isopropylmalate + CoA + H(+). Its pathway is amino-acid biosynthesis; L-leucine biosynthesis; L-leucine from 3-methyl-2-oxobutanoate: step 1/4. Its function is as follows. Catalyzes the condensation of the acetyl group of acetyl-CoA with 3-methyl-2-oxobutanoate (2-ketoisovalerate) to form 3-carboxy-3-hydroxy-4-methylpentanoate (2-isopropylmalate). This chain is 2-isopropylmalate synthase, found in Synechococcus sp. (strain RCC307).